Consider the following 394-residue polypeptide: Alanine--glyoxylate aminotransferase (394 aa).

Pyridoxal 5'-phosphate is bound by residues 76–78, Ser153, and Gln204; that span reads AGH. Substrate is bound at residue Ser153. Lys205 carries the post-translational modification N6-(pyridoxal phosphate)lysine. Residues Tyr256 and Thr259 each contribute to the pyridoxal 5'-phosphate site. Position 356 (Arg356) interacts with substrate.

This sequence belongs to the class-V pyridoxal-phosphate-dependent aminotransferase family. Homodimer. Requires pyridoxal 5'-phosphate as cofactor.

It is found in the peroxisome. The enzyme catalyses glyoxylate + L-alanine = glycine + pyruvate. It carries out the reaction (2S)-2-aminobutanoate + glyoxylate = 2-oxobutanoate + glycine. The catalysed reaction is glyoxylate + L-phenylalanine = 3-phenylpyruvate + glycine. It catalyses the reaction glyoxylate + L-serine = 3-hydroxypyruvate + glycine. The enzyme catalyses 2-oxobutanoate + L-alanine = (2S)-2-aminobutanoate + pyruvate. It carries out the reaction L-phenylalanine + pyruvate = 3-phenylpyruvate + L-alanine. The catalysed reaction is L-serine + pyruvate = 3-hydroxypyruvate + L-alanine. Functionally, catalyzes the pyridoxal 5'-phosphate-dependent transamination of alanine with glyoxylate as an amino group acceptor. Can also catalyze, although with much less efficiency, the transamination of amino-butyrate, phenylalanine and serine with glyoxylate or pyruvate as an amino group acceptor. Does not catalyze the transamination of both 3-hydroxykynurenine and L-kynurenine. May play a role in the detoxification of glyoxylate, a toxic plant metabolite from the fly diet. This Drosophila melanogaster (Fruit fly) protein is Alanine--glyoxylate aminotransferase.